The following is a 159-amino-acid chain: 2-C-methyl-D-erythritol 2,4-cyclodiphosphate synthase (159 aa).

Positions 10 and 12 each coordinate a divalent metal cation. Residues 10–12 (DVH) and 36–37 (HS) contribute to the 4-CDP-2-C-methyl-D-erythritol 2-phosphate site. Residue His-44 coordinates a divalent metal cation. 4-CDP-2-C-methyl-D-erythritol 2-phosphate is bound by residues 58 to 60 (DIG), 134 to 137 (TTSE), Phe-141, and Arg-144.

Belongs to the IspF family. As to quaternary structure, homotrimer. A divalent metal cation is required as a cofactor.

It catalyses the reaction 4-CDP-2-C-methyl-D-erythritol 2-phosphate = 2-C-methyl-D-erythritol 2,4-cyclic diphosphate + CMP. It functions in the pathway isoprenoid biosynthesis; isopentenyl diphosphate biosynthesis via DXP pathway; isopentenyl diphosphate from 1-deoxy-D-xylulose 5-phosphate: step 4/6. Involved in the biosynthesis of isopentenyl diphosphate (IPP) and dimethylallyl diphosphate (DMAPP), two major building blocks of isoprenoid compounds. Catalyzes the conversion of 4-diphosphocytidyl-2-C-methyl-D-erythritol 2-phosphate (CDP-ME2P) to 2-C-methyl-D-erythritol 2,4-cyclodiphosphate (ME-CPP) with a corresponding release of cytidine 5-monophosphate (CMP). This is 2-C-methyl-D-erythritol 2,4-cyclodiphosphate synthase from Cereibacter sphaeroides (strain ATCC 17029 / ATH 2.4.9) (Rhodobacter sphaeroides).